The following is a 96-amino-acid chain: Small cysteine and glycine repeat-containing protein 7 (96 aa).

The 14 X 2 AA repeats of CG stretch occupies residues 4 to 80 (CGCGSCGGCG…TCGSCGCGCG (77 aa)).

The protein belongs to the KRTAP type 28 family.

Its function is as follows. In the hair cortex, hair keratin intermediate filaments are embedded in an interfilamentous matrix, consisting of hair keratin-associated proteins (KRTAP), which are essential for the formation of a rigid and resistant hair shaft through their extensive disulfide bond cross-linking with abundant cysteine residues of hair keratins. The matrix proteins include the high-sulfur and high-glycine-tyrosine keratins. This is Small cysteine and glycine repeat-containing protein 7 from Homo sapiens (Human).